The primary structure comprises 327 residues: Inactive peptidyl-prolyl cis-trans isomerase FKBP6 (327 aa).

The interval 1–20 (MSVFSRLRNGIPPSRDDCQS) is disordered. The 90-residue stretch at 54–143 (DASVLVKYSG…LFEIELIDFL (90 aa)) folds into the PPIase FKBP-type domain. TPR repeat units lie at residues 171–204 (AATE…LHRR), 219–252 (LLVL…DKRN), and 253–286 (AKAL…QPCN).

The protein belongs to the FKBP6 family. In terms of assembly, interacts with HSP72/HSPA2 and CLTC. Interacts with GAPDH; leading to inhibit GAPDH catalytic activity. Interacts (via TPR repeats) with HSP90.

The protein resides in the cytoplasm. It localises to the cytosol. It is found in the nucleus. The protein localises to the chromosome. Its function is as follows. Co-chaperone required during spermatogenesis to repress transposable elements and prevent their mobilization, which is essential for the germline integrity. Acts via the piRNA metabolic process, which mediates the repression of transposable elements during meiosis by forming complexes composed of piRNAs and Piwi proteins and govern the methylation and subsequent repression of transposons. Acts as a co-chaperone via its interaction with HSP90 and is required for the piRNA amplification process, the secondary piRNA biogenesis. May be required together with HSP90 in removal of 16 nucleotide ping-pong by-products from Piwi complexes, possibly facilitating turnover of Piwi complexes. The polypeptide is Inactive peptidyl-prolyl cis-trans isomerase FKBP6 (Fkbp6) (Rattus norvegicus (Rat)).